The sequence spans 694 residues: Frizzled-2 (694 aa).

An N-terminal signal peptide occupies residues 1-22; sequence MRHNRLKVLILGLVLLLTSCRA. At 23 to 315 the chain is on the extracellular side; sequence DGPLHSADHG…GPFFSNDEKD (293 aa). Residues 59 to 180 form the FZ domain; it reads DPNLRCEEIT…GDPDNLCMEQ (122 aa). Intrachain disulfides connect C64–C125, C72–C118, C109–C147, C136–C177, and C140–C164. A glycan (N-linked (GlcNAc...) asparagine) is linked at N78. The tract at residues 175 to 253 is disordered; sequence NLCMEQPSYT…QGEKASGKEC (79 aa). The segment covering 187-224 has biased composition (gly residues); that stretch reads GSGGSSGGSGGSGSGSGSGGKRKQGGSGSGGSGAGGSS. N288 carries N-linked (GlcNAc...) asparagine glycosylation. A helical transmembrane segment spans residues 316-336; that stretch reads FAGLWIALWSGLCFCSTLMTL. Topologically, residues 337–352 are cytoplasmic; sequence TTFIIDTERFKYPERP. A helical membrane pass occupies residues 353-373; sequence IVFLSACYFMVAVGYLSRNFL. Residues 374 to 397 are Extracellular-facing; sequence QNEEIACDGLLLRESSTGPHSCTL. Residues 398–418 traverse the membrane as a helical segment; the sequence is VFLLTYFFGMASSIWWVILSF. Over 419-439 the chain is Cytoplasmic; the sequence is TWFLAAGLKWGNEAITKHSQY. The chain crosses the membrane as a helical span at residues 440-460; it reads FHLAAWLIPTVQSVAVLLLSA. Residues 461-482 are Extracellular-facing; sequence VDGDPILGICYVGNLNPDHLKT. The chain crosses the membrane as a helical span at residues 483-503; it reads FVLAPLFVYLVIGTTFLMAGF. Over 504–534 the chain is Cytoplasmic; it reads VSLFRIRSVIKQQGGVGAGVKADKLEKLMIR. The helical transmembrane segment at 535-555 threads the bilayer; it reads IGIFSVLYTVPATIVIGCYLY. Residues 556–584 lie on the Extracellular side of the membrane; the sequence is EAAYFEDWIKALACPCAQVKGPGKKPLYS. Residues 585-605 traverse the membrane as a helical segment; the sequence is VLMLKYFMALAVGITSGVWIW. Topologically, residues 606 to 694 are cytoplasmic; sequence SGKTLESWRR…VLKQPAASHV (89 aa). The Lys-Thr-X-X-X-Trp motif, mediates interaction with the PDZ domain of Dvl family members motif lies at 608–613; it reads KTLESW. The PDZ-binding motif lies at 692–694; sequence SHV.

Belongs to the G-protein coupled receptor Fz/Smo family. In terms of assembly, interacts with ATP6AP2.

The protein localises to the cell membrane. Functionally, receptor for Wnt proteins. Most of frizzled receptors are coupled to the beta-catenin canonical signaling pathway, which leads to the activation of disheveled proteins, inhibition of GSK-3 kinase, nuclear accumulation of beta-catenin and activation of Wnt target genes. A second signaling pathway involving PKC and calcium fluxes has been seen for some family members, but it is not yet clear if it represents a distinct pathway or if it can be integrated in the canonical pathway, as PKC seems to be required for Wnt-mediated inactivation of GSK-3 kinase. Both pathways seem to involve interactions with G-proteins. Required to coordinate the cytoskeletons of epidermal cells to produce a parallel array of cuticular hairs and bristles. The protein is Frizzled-2 (fz2) of Drosophila melanogaster (Fruit fly).